The following is a 59-amino-acid chain: Large ribosomal subunit protein uL30 (59 aa).

Belongs to the universal ribosomal protein uL30 family. Part of the 50S ribosomal subunit.

This chain is Large ribosomal subunit protein uL30, found in Nocardia farcinica (strain IFM 10152).